The following is a 256-amino-acid chain: Homeobox-leucine zipper protein HOX18 (256 aa).

Residues 52 to 117 form a disordered region; sequence YDHGRDEEQA…GGGGGTRKKL (66 aa). A compositionally biased stretch (gly residues) spans 102–112; that stretch reads DGGSGSGGGGG. Residues 112–171 constitute a DNA-binding region (homeobox); that stretch reads GTRKKLQLTKEQSTLLEDSFRVHNILSHAQKHELARQLKLKPRQVEVWFQNRRARTKLKQ. The interval 170-214 is leucine-zipper; sequence KQTEVDCEFLKRCCESLTEENKQLKHELMELRRLASAAAAAAGSQ.

It belongs to the HD-ZIP homeobox family. Class II subfamily. In terms of tissue distribution, expressed in roots, leaf sheaths and blades and panicles.

Its subcellular location is the nucleus. Functionally, probable transcription factor. This chain is Homeobox-leucine zipper protein HOX18 (HOX18), found in Oryza sativa subsp. indica (Rice).